The chain runs to 3387 residues: Genome polyprotein (3387 aa).

Over 1–100 the chain is Cytoplasmic; the sequence is MNQRKKVVRP…LNILNGRKRS (100 aa). The tract at residues 36–71 is hydrophobic; homodimerization of capsid protein C; that stretch reads LFSGKGPLRMVLAFITFLRVLSIPPTAGILKRWGQL. A propeptide spans 100 to 113 (ER anchor for the capsid protein C, removed in mature form by serine protease NS3); sequence STMTLLCLIPTAMA. Residues 101–117 traverse the membrane as a helical segment; the sequence is TMTLLCLIPTAMAFHLS. The Extracellular segment spans residues 118 to 237; the sequence is TRDGEPLMIV…GAWKHAQRVE (120 aa). Asn182 is a glycosylation site (N-linked (GlcNAc...) asparagine; by host). Residues 238–258 traverse the membrane as a helical segment; sequence SWILRNPGFALLAGFMAYMIG. The Cytoplasmic segment spans residues 259–265; that stretch reads QTGIQRT. Residues 266–279 traverse the membrane as a helical segment; sequence VFFVLMMLVAPSYG. Residues 280-723 lie on the Extracellular side of the membrane; it reads MRCVGVGNRD…AVHQVFGSVY (444 aa). Cystine bridges form between Cys282–Cys309, Cys339–Cys400, Cys353–Cys384, Cys371–Cys395, Cys464–Cys564, and Cys581–Cys612. Asn346 carries N-linked (GlcNAc...) asparagine; by host glycosylation. A fusion peptide region spans residues 377-390; it reads DRGWGNGCGLFGKG. A helical transmembrane segment spans residues 724 to 746; that stretch reads TTMFGGVSWMVRILIGFLVLWIG. Over 747-750 the chain is Cytoplasmic; the sequence is TNSR. A helical transmembrane segment spans residues 751 to 771; that stretch reads NTSMAMTCIAVGGITLFLGFT. The Extracellular segment spans residues 772–1194; that stretch reads VHADTGCAVS…MLGDTMSGRM (423 aa). Cystine bridges form between Cys778–Cys789, Cys829–Cys917, Cys953–Cys997, Cys1054–Cys1103, Cys1065–Cys1087, and Cys1086–Cys1090. N-linked (GlcNAc...) asparagine; by host glycosylation is found at Asn904 and Asn981. The helical transmembrane segment at 1195–1218 threads the bilayer; the sequence is GGQIHLAIMAVFKMSPGYVLGIFL. Residues 1219 to 1224 are Lumenal-facing; that stretch reads RKLTSR. Residues 1225–1243 form a helical membrane-spanning segment; it reads ETALMVIGMAMTTVLSIPH. Topologically, residues 1244-1267 are cytoplasmic; the sequence is DLMEFIDGISLGLILLKMVTHFDN. A helical membrane pass occupies residues 1268–1288; sequence TQVGTLALSLTFIRSTMPLVM. Position 1289 (Ala1289) is a topological domain, lumenal. The chain crosses the membrane as a helical span at residues 1290–1308; sequence WRTIMAVLFVVTLIPLCRT. Residues 1309–1316 lie on the Lumenal side of the membrane; the sequence is SCLQKQSH. The helical transmembrane segment at 1317-1337 threads the bilayer; it reads WVEITALILGAQALPVYLMTL. Topologically, residues 1338-1345 are cytoplasmic; sequence MKGASKRS. Residues 1346–1366 form a helical membrane-spanning segment; it reads WPLNEGIMAVGLVSLLGSALL. Residues 1367 to 1369 lie on the Lumenal side of the membrane; the sequence is KND. A helical transmembrane segment spans residues 1370 to 1390; it reads VPLAGPMVAGGLLLAAYVMSG. Over 1391–1437 the chain is Cytoplasmic; it reads SSADLSLEKAANVQWDEMADITGSSPIIEVKQDEDGSFSIRDIEETN. The interacts with and activates NS3 protease stretch occupies residues 1397 to 1436; that stretch reads LEKAANVQWDEMADITGSSPIIEVKQDEDGSFSIRDIEET. Residues 1438 to 1458 constitute an intramembrane region (helical); it reads MITLLVKLALITVSGLYPLAI. At 1459–2146 the chain is on the cytoplasmic side; sequence PVTMTLWYMW…LNELPESLET (688 aa). In terms of domain architecture, Peptidase S7 spans 1475 to 1652; the sequence is SGALWDVPSP…ERTGEPDYEV (178 aa). Active-site charge relay system; for serine protease NS3 activity residues include His1525, Asp1549, and Ser1609. Positions 1654 to 1810 constitute a Helicase ATP-binding domain; sequence EDIFRKKRLT…QSNSPIEDIE (157 aa). The tract at residues 1658–1661 is important for RNA-binding; the sequence is RKKR. 1667–1674 contacts ATP; it reads LHPGAGKT. Residues 1758–1761 carry the DEAH box motif; that stretch reads DEAH. The region spanning 1820-1987 is the Helicase C-terminal domain; sequence TGFDWITDYQ…IIPTLFGPER (168 aa). Lys1862 carries the N6-acetyllysine; by host modification. A helical transmembrane segment spans residues 2147–2167; the sequence is LMLVALLGAMTAGIFLFFMQG. Over 2168 to 2169 the chain is Lumenal; it reads KG. An intramembrane region (helical) is located at residues 2170–2190; it reads IGKLSMGLIAIAVASGLLWVA. Residue Glu2191 is a topological domain, lumenal. A helical membrane pass occupies residues 2192–2212; sequence IQPQWIAASIILEFFLMVLLI. The Cytoplasmic portion of the chain corresponds to 2213-2225; it reads PEPEKQRTPQDNQ. Residues 2226–2246 form a helical membrane-spanning segment; the sequence is LIYVILTILTIIGLIAANEMG. Residues 2247–2270 lie on the Lumenal side of the membrane; it reads LIEKTKTDFGFYQVKTETTILDVD. Positions 2271–2291 form an intramembrane region, helical; it reads LRPASAWTLYAVATTILTPML. Over 2292–2301 the chain is Lumenal; it reads RHTIENTSAN. N-linked (GlcNAc...) asparagine; by host glycans are attached at residues Asn2297 and Asn2301. The helical intramembrane region spans 2302–2322; it reads LSLAAIANQAAVLMGLGKGWP. Residues 2323-2343 are Lumenal-facing; sequence LHRMDLGVPLLAMGCYSQVNP. Residues 2344-2364 traverse the membrane as a helical segment; the sequence is TTLIASLVMLLVHYAIIGPGL. Topologically, residues 2365-2409 are cytoplasmic; the sequence is QAKATREAQKRTAAGIMKNPTVDGITVIDLEPISYDPKFEKQLGQ. Residues 2410–2430 traverse the membrane as a helical segment; that stretch reads VMLLVLCAGQLLLMRTTWAFC. At 2431-2455 the chain is on the lumenal side; the sequence is EVLTLATGPVLTLWEGNPGRFWNTT. Asn2453 is a glycosylation site (N-linked (GlcNAc...) asparagine; by host). A helical membrane pass occupies residues 2456–2476; the sequence is IAVSTANIFRGSYLAGAGLAF. At 2477 to 3387 the chain is on the cytoplasmic side; sequence SLIKNAQTPR…SAPFESEGVL (911 aa). The 263-residue stretch at 2489–2751 folds into the mRNA cap 0-1 NS5-type MT domain; the sequence is TGTTGETLGE…DVDLGAGTRS (263 aa). Ser2543 contacts S-adenosyl-L-methionine. Ser2543 bears the Phosphoserine mark. Lys2548 (for 2'-O-MTase activity) is an active-site residue. An SUMO-interacting motif motif is present at residues 2564–2567; sequence VVDL. Gly2573, Trp2574, Thr2591, Lys2592, Asp2618, and Val2619 together coordinate S-adenosyl-L-methionine. Asp2633 acts as the For 2'-O-MTase activity in catalysis. Position 2634 (Ile2634) interacts with S-adenosyl-L-methionine. Active-site for 2'-O-MTase activity residues include Lys2668 and Glu2704. Residue Tyr2706 coordinates S-adenosyl-L-methionine. 4 residues coordinate Zn(2+): Glu2925, His2929, Cys2934, and Cys2937. In terms of domain architecture, RdRp catalytic spans 3016 to 3166; that stretch reads LIYADDTAGW…PLDERFSTSL (151 aa). Residues His3200, Cys3216, and Cys3335 each coordinate Zn(2+).

This sequence in the N-terminal section; belongs to the class I-like SAM-binding methyltransferase superfamily. mRNA cap 0-1 NS5-type methyltransferase family. Homodimer. Interacts (via N-terminus) with host EXOC1 (via C-terminus); this interaction results in EXOC1 degradation through the proteasome degradation pathway. In terms of assembly, forms heterodimers with envelope protein E in the endoplasmic reticulum and Golgi. As to quaternary structure, homodimer; in the endoplasmic reticulum and Golgi. Interacts with protein prM. Interacts with non-structural protein 1. Homodimer; Homohexamer when secreted. Interacts with envelope protein E. In terms of assembly, interacts (via N-terminus) with serine protease NS3. As to quaternary structure, forms a heterodimer with serine protease NS3. May form homooligomers. Forms a heterodimer with NS2B. Interacts with NS4B. Interacts with unphosphorylated RNA-directed RNA polymerase NS5; this interaction stimulates RNA-directed RNA polymerase NS5 guanylyltransferase activity. In terms of assembly, interacts with host MAVS; this interaction inhibits the synthesis of IFN-beta. Interacts with host AUP1; the interaction occurs in the presence of Dengue virus NS4B and induces lipophagy which facilitates production of virus progeny particles. As to quaternary structure, interacts with serine protease NS3. Homodimer. Interacts with host STAT2; this interaction inhibits the phosphorylation of the latter, and, when all viral proteins are present (polyprotein), targets STAT2 for degradation. Interacts with serine protease NS3. Interacts with host PAF1 complex; the interaction may prevent the recruitment of the PAF1 complex to interferon-responsive genes, and thus reduces the immune response. In terms of processing, specific enzymatic cleavages in vivo yield mature proteins. Cleavages in the lumen of endoplasmic reticulum are performed by host signal peptidase, whereas cleavages in the cytoplasmic side are performed by serine protease NS3. Signal cleavage at the 2K-4B site requires a prior NS3 protease-mediated cleavage at the 4A-2K site. Post-translationally, cleaved in post-Golgi vesicles by a host furin, releasing the mature small envelope protein M, and peptide pr. This cleavage is incomplete as up to 30% of viral particles still carry uncleaved prM. N-glycosylated. In terms of processing, N-glycosylated. The excreted form is glycosylated and this is required for efficient secretion of the protein from infected cells. Post-translationally, acetylated by host KAT5. Acetylation modulates NS3 RNA-binding and unwinding activities and plays an important positive role for viral replication. Sumoylation of RNA-directed RNA polymerase NS5 increases NS5 protein stability allowing proper viral RNA replication. In terms of processing, phosphorylated on serines residues. This phosphorylation may trigger NS5 nuclear localization.

Its subcellular location is the virion. It is found in the host nucleus. It localises to the host cytoplasm. The protein resides in the host perinuclear region. The protein localises to the secreted. Its subcellular location is the virion membrane. It is found in the host endoplasmic reticulum membrane. It localises to the host mitochondrion. It catalyses the reaction Selective hydrolysis of -Xaa-Xaa-|-Yaa- bonds in which each of the Xaa can be either Arg or Lys and Yaa can be either Ser or Ala.. It carries out the reaction RNA(n) + a ribonucleoside 5'-triphosphate = RNA(n+1) + diphosphate. The enzyme catalyses a ribonucleoside 5'-triphosphate + H2O = a ribonucleoside 5'-diphosphate + phosphate + H(+). The catalysed reaction is ATP + H2O = ADP + phosphate + H(+). It catalyses the reaction a 5'-end (5'-triphosphoguanosine)-ribonucleoside in mRNA + S-adenosyl-L-methionine = a 5'-end (N(7)-methyl 5'-triphosphoguanosine)-ribonucleoside in mRNA + S-adenosyl-L-homocysteine. It carries out the reaction a 5'-end (N(7)-methyl 5'-triphosphoguanosine)-ribonucleoside in mRNA + S-adenosyl-L-methionine = a 5'-end (N(7)-methyl 5'-triphosphoguanosine)-(2'-O-methyl-ribonucleoside) in mRNA + S-adenosyl-L-homocysteine + H(+). Its function is as follows. Plays a role in virus budding by binding to the cell membrane and gathering the viral RNA into a nucleocapsid that forms the core of a mature virus particle. During virus entry, may induce genome penetration into the host cytoplasm after hemifusion induced by the surface proteins. Can migrate to the cell nucleus where it modulates host functions. Overcomes the anti-viral effects of host EXOC1 by sequestering and degrading the latter through the proteasome degradation pathway. In terms of biological role, inhibits RNA silencing by interfering with host Dicer. Prevents premature fusion activity of envelope proteins in trans-Golgi by binding to envelope protein E at pH6.0. After virion release in extracellular space, gets dissociated from E dimers. Functionally, acts as a chaperone for envelope protein E during intracellular virion assembly by masking and inactivating envelope protein E fusion peptide. prM is the only viral peptide matured by host furin in the trans-Golgi network probably to avoid catastrophic activation of the viral fusion activity in acidic Golgi compartment prior to virion release. prM-E cleavage is inefficient, and many virions are only partially matured. These uncleaved prM would play a role in immune evasion. Its function is as follows. May play a role in virus budding. Exerts cytotoxic effects by activating a mitochondrial apoptotic pathway through M ectodomain. May display a viroporin activity. In terms of biological role, binds to host cell surface receptor and mediates fusion between viral and cellular membranes. Envelope protein is synthesized in the endoplasmic reticulum in the form of heterodimer with protein prM. They play a role in virion budding in the ER, and the newly formed immature particle is covered with 60 spikes composed of heterodimer between precursor prM and envelope protein E. The virion is transported to the Golgi apparatus where the low pH causes dissociation of PrM-E heterodimers and formation of E homodimers. prM-E cleavage is inefficient, and many virions are only partially matured. These uncleaved prM would play a role in immune evasion. Involved in immune evasion, pathogenesis and viral replication. Once cleaved off the polyprotein, is targeted to three destinations: the viral replication cycle, the plasma membrane and the extracellular compartment. Essential for viral replication. Required for formation of the replication complex and recruitment of other non-structural proteins to the ER-derived membrane structures. Excreted as a hexameric lipoparticle that plays a role against host immune response. Antagonizing the complement function. Binds to the host macrophages and dendritic cells. Inhibits signal transduction originating from Toll-like receptor 3 (TLR3). Functionally, disrupts the host endothelial glycocalyx layer of host pulmonary microvascular endothelial cells, inducing degradation of sialic acid and shedding of heparan sulfate proteoglycans. NS1 induces expression of sialidases, heparanase, and activates cathepsin L, which activates heparanase via enzymatic cleavage. These effects are probably linked to the endothelial hyperpermeability observed in severe dengue disease. Its function is as follows. Component of the viral RNA replication complex that functions in virion assembly and antagonizes the host immune response. In terms of biological role, required cofactor for the serine protease function of NS3. May have membrane-destabilizing activity and form viroporins. Displays three enzymatic activities: serine protease, NTPase and RNA helicase. NS3 serine protease, in association with NS2B, performs its autocleavage and cleaves the polyprotein at dibasic sites in the cytoplasm: C-prM, NS2A-NS2B, NS2B-NS3, NS3-NS4A, NS4A-2K and NS4B-NS5. NS3 RNA helicase binds RNA and unwinds dsRNA in the 3' to 5' direction. Functionally, regulates the ATPase activity of the NS3 helicase activity. NS4A allows NS3 helicase to conserve energy during unwinding. Plays a role in the inhibition of the host innate immune response. Interacts with host MAVS and thereby prevents the interaction between RIGI and MAVS. In turn, IFN-beta production is impaired. Interacts with host AUP1 which mediates induction of lipophagy in host cells and facilitates production of virus progeny particles. Its function is as follows. Functions as a signal peptide for NS4B and is required for the interferon antagonism activity of the latter. In terms of biological role, induces the formation of ER-derived membrane vesicles where the viral replication takes place. Inhibits interferon (IFN)-induced host STAT1 phosphorylation and nuclear translocation, thereby preventing the establishment of cellular antiviral state by blocking the IFN-alpha/beta pathway. Replicates the viral (+) and (-) RNA genome, and performs the capping of genomes in the cytoplasm. NS5 methylates viral RNA cap at guanine N-7 and ribose 2'-O positions. Besides its role in RNA genome replication, also prevents the establishment of cellular antiviral state by blocking the interferon-alpha/beta (IFN-alpha/beta) signaling pathway. Inhibits host TYK2 and STAT2 phosphorylation, thereby preventing activation of JAK-STAT signaling pathway. May reduce immune responses by preventing the recruitment of the host PAF1 complex to interferon-responsive genes. The polypeptide is Genome polyprotein (Aedes aegypti (Yellowfever mosquito)).